The sequence spans 155 residues: Ribosome maturation factor RimP (155 aa).

This sequence belongs to the RimP family.

The protein resides in the cytoplasm. Functionally, required for maturation of 30S ribosomal subunits. The chain is Ribosome maturation factor RimP from Bacteroides thetaiotaomicron (strain ATCC 29148 / DSM 2079 / JCM 5827 / CCUG 10774 / NCTC 10582 / VPI-5482 / E50).